Here is a 299-residue protein sequence, read N- to C-terminus: UDP-N-acetylenolpyruvoylglucosamine reductase (299 aa).

The 166-residue stretch at Lys-28–Gly-193 folds into the FAD-binding PCMH-type domain. Residue Arg-172 is part of the active site. The active-site Proton donor is Ser-222. Glu-292 is an active-site residue.

It belongs to the MurB family. Requires FAD as cofactor.

It localises to the cytoplasm. It carries out the reaction UDP-N-acetyl-alpha-D-muramate + NADP(+) = UDP-N-acetyl-3-O-(1-carboxyvinyl)-alpha-D-glucosamine + NADPH + H(+). The protein operates within cell wall biogenesis; peptidoglycan biosynthesis. Its function is as follows. Cell wall formation. This chain is UDP-N-acetylenolpyruvoylglucosamine reductase, found in Lactococcus lactis subsp. cremoris (strain SK11).